The primary structure comprises 165 residues: V-type proton ATPase 16 kDa proteolipid subunit (165 aa).

Residues 1 to 12 (MSTVFNGDETAP) are Lumenal-facing. A helical transmembrane segment spans residues 13–33 (FFGFLGAAAALVFSCMGAAYG). At 34-55 (TAKSGVGVASMGVMRPELVMKS) the chain is on the cytoplasmic side. A helical transmembrane segment spans residues 56–76 (IVPVVMAGVLGIYGLIIAVII). Over 77 to 95 (STGINPKAKSYYLFDGYAH) the chain is Lumenal. Residues 96–117 (LSSGLACGLAGLSAGMAIGIVG) traverse the membrane as a helical segment. The Cytoplasmic portion of the chain corresponds to 118 to 129 (DAGVRANAQQPK). Residues 130-155 (LFVGMILILIFAEALALYGLIVGIIL) form a helical membrane-spanning segment. The Lumenal portion of the chain corresponds to 156–165 (SSRAGQSRAD).

The protein belongs to the V-ATPase proteolipid subunit family. As to quaternary structure, V-ATPase is a heteromultimeric enzyme composed of a peripheral catalytic V1 complex (main components: subunits A, B, C, D, E, and F) attached to an integral membrane V0 proton pore complex (main component: the proteolipid protein; which is present as a hexamer that forms the proton-conducting pore).

The protein localises to the vacuole membrane. Proton-conducting pore forming subunit of the membrane integral V0 complex of vacuolar ATPase. V-ATPase is responsible for acidifying a variety of intracellular compartments in eukaryotic cells. This Mesembryanthemum crystallinum (Common ice plant) protein is V-type proton ATPase 16 kDa proteolipid subunit (VMAC1).